The sequence spans 769 residues: 3-O-beta-D-glucopyranosyl-beta-D-glucuronide phosphorylase (769 aa).

The active-site Proton donor is the Asp-457.

Belongs to the glycosyl hydrolase 94 family. In terms of assembly, homodimer.

Its subcellular location is the cytoplasm. It carries out the reaction 3-O-beta-D-glucosyl-D-glucuronate + phosphate = aldehydo-D-glucuronate + alpha-D-glucose 1-phosphate. It catalyses the reaction a 3-O-beta-D-glucosyl-beta-D-glucuronoside + phosphate = a beta-D-glucuronoside + alpha-D-glucose 1-phosphate. Functionally, glycoside phosphorylase that catalyzes the reversible phosphorolysis of 3-O-beta-D-glucosyl-D-glucuronate into D-glucuronic acid and alpha-D-glucose 1-phosphate. Cannot phosphorolyze cellobionic acid and laminaribiose. In the reverse direction, using alpha-D-glucose 1-phosphate as a donor substrate, the enzyme acts on D-glucuronate and its artificial derivative p-nitrophenyl-beta-D-glucuronide. The apparent catalytic efficiency towards p-nitrophenyl-beta-D-glucuronide is approximately 5-fold higher than that towards D-glucuronic acid. Is probably involved in the metabolism of oligosaccharides containing the 3-O-beta-D-glucopyranosyl-beta-D-glucuronide structure released from bacterial and plant acidic carbohydrates. The sequence is that of 3-O-beta-D-glucopyranosyl-beta-D-glucuronide phosphorylase from Paenibacillus borealis.